A 485-amino-acid polypeptide reads, in one-letter code: AP2-like ethylene-responsive transcription factor TOE2 (485 aa).

Over residues 124–135 (GDFIGSGSGGGD) the composition is skewed to gly residues. The interval 124 to 161 (GDFIGSGSGGGDASRVMQPPSQPVKKSRRGPRSKSSQY) is disordered. The segment at residues 160-216 (QYRGVTFYRRTGRWESHIWDCGKQVYLGGFDTAHAAARAYDRAAVKFRGLEADINFV) is a DNA-binding region (AP2/ERF).

The protein belongs to the AP2/ERF transcription factor family. AP2 subfamily.

The protein resides in the nucleus. Its function is as follows. Probably acts as a transcriptional activator. Binds to the GCC-box pathogenesis-related promoter element. May be involved in the regulation of gene expression by stress factors and by components of stress signal transduction pathways. Regulates negatively the transition to flowering time and confers flowering time delay. The sequence is that of AP2-like ethylene-responsive transcription factor TOE2 (TOE2) from Arabidopsis thaliana (Mouse-ear cress).